The primary structure comprises 959 residues: Protein NLP7 (959 aa).

The tract at residues 1 to 22 is disordered; it reads MCEPDDNSARNGVTTQPSRSRE. The segment covering 9–18 has biased composition (polar residues); the sequence is ARNGVTTQPS. The 82-residue stretch at 578-659 folds into the RWP-RK domain; it reads KKKTEKKRGK…IESVQGTDGG (82 aa). Residues 633 to 654 adopt a coiled-coil conformation; the sequence is SRKIKKVNRSITKLKRVIESVQ. Polar residues-rich tracts occupy residues 673–687, 694–703, and 735–745; these read THGQ…SPNG, PNTNNSPNHW, and GTPTSHGSCDG. Positions 673-760 are disordered; that stretch reads THGQTSAQPL…PKVPNQDPLF (88 aa). The PB1 domain maps to 863 to 945; it reads TVTIKASYKD…KIVRLLVHDV (83 aa).

Interacts with NRG2. Expressed in roots, stems, leaves, flowers and siliques. Detected in root hairs, emerging secondary roots, vascular tissues, leaf parenchyma cells and stomata.

It localises to the nucleus. In terms of biological role, transcription factor involved in regulation of nitrate assimilation and in transduction of the nitrate signal. This chain is Protein NLP7 (NLP7), found in Arabidopsis thaliana (Mouse-ear cress).